The primary structure comprises 249 residues: tRNA uridine(34) hydroxylase (249 aa).

Residues 124–218 form the Rhodanese domain; that stretch reads TKQDVIVIDT…YLEDTQNKNN (95 aa). The active-site Cysteine persulfide intermediate is the Cys-178.

Belongs to the TrhO family.

The catalysed reaction is uridine(34) in tRNA + AH2 + O2 = 5-hydroxyuridine(34) in tRNA + A + H2O. Catalyzes oxygen-dependent 5-hydroxyuridine (ho5U) modification at position 34 in tRNAs. The chain is tRNA uridine(34) hydroxylase from Rickettsia canadensis (strain McKiel).